A 146-amino-acid polypeptide reads, in one-letter code: NADH-ubiquinone oxidoreductase chain 6 (146 aa).

4 helical membrane-spanning segments follow: residues 10-30, 43-63, 81-101, and 124-144; these read ILAI…LLFV, LMGI…FLFI, VIVL…PIAI, and APML…AIAM.

Belongs to the complex I subunit 6 family.

It is found in the mitochondrion membrane. It carries out the reaction a ubiquinone + NADH + 5 H(+)(in) = a ubiquinol + NAD(+) + 4 H(+)(out). Functionally, core subunit of the mitochondrial membrane respiratory chain NADH dehydrogenase (Complex I) that is believed to belong to the minimal assembly required for catalysis. Complex I functions in the transfer of electrons from NADH to the respiratory chain. The immediate electron acceptor for the enzyme is believed to be ubiquinone. The polypeptide is NADH-ubiquinone oxidoreductase chain 6 (NAD6) (Candida albicans (strain SC5314 / ATCC MYA-2876) (Yeast)).